The sequence spans 618 residues: Carotenoid cleavage dioxygenase 7, chloroplastic (618 aa).

A chloroplast-targeting transit peptide spans 1 to 31; the sequence is MSLPIPPKFLPPLKSPPIHHHQTPPPLAPPR. The interval 11-34 is disordered; it reads PPLKSPPIHHHQTPPPLAPPRAAI. Fe cation contacts are provided by His-266, His-319, His-398, and His-612.

This sequence belongs to the carotenoid oxygenase family. Fe(2+) serves as cofactor. Expressed in flowers, siliques, inflorescence stems, petiole, leaves and roots.

It localises to the plastid. The protein localises to the chloroplast. It catalyses the reaction 9-cis-beta-carotene + O2 = 9-cis-10'-apo-beta-carotenal + beta-ionone. Functionally, involved in strigolactones biosynthesis by cleaving asymmetrically a variety of linear and cyclic carotenoids at the 9-10 double bond. Produces one C(13) beta-ionone and the C(27) 10'-apo-beta-carotenal. Strigolactones are hormones that inhibit tillering and shoot branching through the MAX-dependent pathway, contribute to the regulation of shoot architectural response to phosphate-limiting conditions and function as rhizosphere signal that stimulates hyphal branching of arbuscular mycorrhizal fungi and trigger seed germination of root parasitic weeds. No activity on lycopene, lutein, zeaxanthin, violaxanthin or neoxanthin. Probably not involved in abscisic acid biosynthesis. This chain is Carotenoid cleavage dioxygenase 7, chloroplastic (CCD7), found in Arabidopsis thaliana (Mouse-ear cress).